The sequence spans 134 residues: UPF0412 protein YaaI (134 aa).

The signal sequence occupies residues M1–A23.

Belongs to the UPF0412 family.

This is UPF0412 protein YaaI from Escherichia coli O157:H7.